Consider the following 471-residue polypeptide: ATP synthase subunit beta (471 aa).

Residue 152–159 (GGAGVGKT) participates in ATP binding.

This sequence belongs to the ATPase alpha/beta chains family. In terms of assembly, F-type ATPases have 2 components, CF(1) - the catalytic core - and CF(0) - the membrane proton channel. CF(1) has five subunits: alpha(3), beta(3), gamma(1), delta(1), epsilon(1). CF(0) has three main subunits: a(1), b(2) and c(9-12). The alpha and beta chains form an alternating ring which encloses part of the gamma chain. CF(1) is attached to CF(0) by a central stalk formed by the gamma and epsilon chains, while a peripheral stalk is formed by the delta and b chains.

It localises to the cell membrane. The enzyme catalyses ATP + H2O + 4 H(+)(in) = ADP + phosphate + 5 H(+)(out). Its function is as follows. Produces ATP from ADP in the presence of a proton gradient across the membrane. The catalytic sites are hosted primarily by the beta subunits. The protein is ATP synthase subunit beta of Herpetosiphon aurantiacus (strain ATCC 23779 / DSM 785 / 114-95).